Consider the following 518-residue polypeptide: ATP synthase subunit alpha (518 aa).

Gly169–Thr176 is a binding site for ATP.

The protein belongs to the ATPase alpha/beta chains family. As to quaternary structure, F-type ATPases have 2 components, CF(1) - the catalytic core - and CF(0) - the membrane proton channel. CF(1) has five subunits: alpha(3), beta(3), gamma(1), delta(1), epsilon(1). CF(0) has three main subunits: a(1), b(2) and c(9-12). The alpha and beta chains form an alternating ring which encloses part of the gamma chain. CF(1) is attached to CF(0) by a central stalk formed by the gamma and epsilon chains, while a peripheral stalk is formed by the delta and b chains.

The protein localises to the cell membrane. The enzyme catalyses ATP + H2O + 4 H(+)(in) = ADP + phosphate + 5 H(+)(out). Its function is as follows. Produces ATP from ADP in the presence of a proton gradient across the membrane. The alpha chain is a regulatory subunit. The polypeptide is ATP synthase subunit alpha (Enterococcus hirae (strain ATCC 9790 / DSM 20160 / JCM 8729 / LMG 6399 / NBRC 3181 / NCIMB 6459 / NCDO 1258 / NCTC 12367 / WDCM 00089 / R)).